We begin with the raw amino-acid sequence, 157 residues long: uncharacterized protein (157 aa).

Residues 1 to 30 (MLPEQGPQPSTMPLWCLLAACTSLPRQAAT) form the signal peptide.

It is found in the secreted. This is an uncharacterized protein from Homo sapiens (Human).